Consider the following 519-residue polypeptide: Light-independent protochlorophyllide reductase subunit B (519 aa).

Position 36 (D36) interacts with [4Fe-4S] cluster. The active-site Proton donor is D274. Residue 409–410 (GL) participates in substrate binding. Positions 426-465 (DEAGPSHHGGHSPKPSEAARTPDKVEERADPAPEAPQTGS) are disordered. Residues 445-456 (RTPDKVEERADP) are compositionally biased toward basic and acidic residues.

This sequence belongs to the ChlB/BchB/BchZ family. Protochlorophyllide reductase is composed of three subunits; BchL, BchN and BchB. Forms a heterotetramer of two BchB and two BchN subunits. It depends on [4Fe-4S] cluster as a cofactor.

It catalyses the reaction chlorophyllide a + oxidized 2[4Fe-4S]-[ferredoxin] + 2 ADP + 2 phosphate = protochlorophyllide a + reduced 2[4Fe-4S]-[ferredoxin] + 2 ATP + 2 H2O. It participates in porphyrin-containing compound metabolism; bacteriochlorophyll biosynthesis (light-independent). In terms of biological role, component of the dark-operative protochlorophyllide reductase (DPOR) that uses Mg-ATP and reduced ferredoxin to reduce ring D of protochlorophyllide (Pchlide) to form chlorophyllide a (Chlide). This reaction is light-independent. The NB-protein (BchN-BchB) is the catalytic component of the complex. The polypeptide is Light-independent protochlorophyllide reductase subunit B (Jannaschia sp. (strain CCS1)).